The chain runs to 79 residues: RNA-binding protein Hfq (79 aa).

A Sm domain is found at 10 to 69 (GPFLNALRKEHVPVSIYLVNGIKLQGNIESFDQYVVLLRNTVTQMVYKHAISTVVPARAV).

Belongs to the Hfq family. In terms of assembly, homohexamer.

Its function is as follows. RNA chaperone that binds small regulatory RNA (sRNAs) and mRNAs to facilitate mRNA translational regulation in response to envelope stress, environmental stress and changes in metabolite concentrations. Also binds with high specificity to tRNAs. This chain is RNA-binding protein Hfq, found in Cupriavidus necator (strain ATCC 17699 / DSM 428 / KCTC 22496 / NCIMB 10442 / H16 / Stanier 337) (Ralstonia eutropha).